A 90-amino-acid chain; its full sequence is Small ribosomal subunit protein uS19 (90 aa).

The protein belongs to the universal ribosomal protein uS19 family.

Functionally, protein S19 forms a complex with S13 that binds strongly to the 16S ribosomal RNA. This chain is Small ribosomal subunit protein uS19, found in Clostridium beijerinckii (strain ATCC 51743 / NCIMB 8052) (Clostridium acetobutylicum).